The following is a 193-amino-acid chain: uncharacterized protein (193 aa).

A signal peptide spans 1–26 (MRNVFVGALCMCGMSFVFSDSVRSAA).

This is an uncharacterized protein from Treponema pallidum (strain Nichols).